An 88-amino-acid chain; its full sequence is Putative regulatory protein AM1_5498 (88 aa).

Belongs to the RemA family.

This is Putative regulatory protein AM1_5498 from Acaryochloris marina (strain MBIC 11017).